A 115-amino-acid chain; its full sequence is MTLKQVIVVRDDLKLSRGKLAVQVAHAAIIGYLKSDSSLRRKWLDEGQKKVVLKVKSLEELLGIKHKAESLGLVTGLVQDAGLTEVPPGTITAVVIGPDEERKIDKVTGNLPLLK.

It belongs to the PTH2 family.

The protein localises to the cytoplasm. It carries out the reaction an N-acyl-L-alpha-aminoacyl-tRNA + H2O = an N-acyl-L-amino acid + a tRNA + H(+). The natural substrate for this enzyme may be peptidyl-tRNAs which drop off the ribosome during protein synthesis. The sequence is that of Peptidyl-tRNA hydrolase from Archaeoglobus fulgidus (strain ATCC 49558 / DSM 4304 / JCM 9628 / NBRC 100126 / VC-16).